Reading from the N-terminus, the 123-residue chain is Small ribosomal subunit protein uS13 (123 aa).

Positions 99-123 are disordered; that stretch reads RGQRTRTNARTRKGPRRTVGVKRKK.

It belongs to the universal ribosomal protein uS13 family. Part of the 30S ribosomal subunit. Forms a loose heterodimer with protein S19. Forms two bridges to the 50S subunit in the 70S ribosome.

Located at the top of the head of the 30S subunit, it contacts several helices of the 16S rRNA. In the 70S ribosome it contacts the 23S rRNA (bridge B1a) and protein L5 of the 50S subunit (bridge B1b), connecting the 2 subunits; these bridges are implicated in subunit movement. Contacts the tRNAs in the A and P-sites. In Carboxydothermus hydrogenoformans (strain ATCC BAA-161 / DSM 6008 / Z-2901), this protein is Small ribosomal subunit protein uS13.